Reading from the N-terminus, the 248-residue chain is NADP-dependent 3-hydroxy acid dehydrogenase YdfG (248 aa).

Residues 7–12 (GATAGF), 32–33 (RR), 54–55 (DV), and Asn-81 contribute to the NADP(+) site. Ser-134 provides a ligand contact to substrate. NADP(+)-binding positions include Tyr-147, Lys-151, and 177-185 (PGLVGGTEF). Tyr-147 serves as the catalytic Proton acceptor.

This sequence belongs to the short-chain dehydrogenases/reductases (SDR) family. In terms of assembly, homotetramer.

It carries out the reaction 3-hydroxypropanoate + NADP(+) = 3-oxopropanoate + NADPH + H(+). The catalysed reaction is L-allo-threonine + NADP(+) = aminoacetone + CO2 + NADPH. In terms of biological role, NADP-dependent dehydrogenase with broad substrate specificity acting on 3-hydroxy acids. Catalyzes the NADP-dependent oxidation of L-allo-threonine to L-2-amino-3-keto-butyrate, which is spontaneously decarboxylated into aminoacetone. Also acts on D-threonine, L-serine, D-serine, D-3-hydroxyisobutyrate, L-3-hydroxyisobutyrate, D-glycerate and L-glycerate. Able to catalyze the reduction of the malonic semialdehyde to 3-hydroxypropionic acid. YdfG is apparently supplementing RutE, the presumed malonic semialdehyde reductase involved in pyrimidine degradation since both are able to detoxify malonic semialdehyde. The chain is NADP-dependent 3-hydroxy acid dehydrogenase YdfG from Salmonella typhi.